The sequence spans 68 residues: Large ribosomal subunit protein uL29 (68 aa).

A disordered region spans residues 32–68 (QDQLKRRTGSLDNPAERTQHRRDLARVLTVLTQKTKA). Residues 45–56 (PAERTQHRRDLA) are compositionally biased toward basic and acidic residues.

This sequence belongs to the universal ribosomal protein uL29 family.

The polypeptide is Large ribosomal subunit protein uL29 (Myxococcus xanthus (strain DK1622)).